Here is a 355-residue protein sequence, read N- to C-terminus: Occlusion-derived virus envelope protein E56 (355 aa).

A helical membrane pass occupies residues 150–170; that stretch reads AGYVTLFGVSVYLVINVADLV. Residue N178 is glycosylated (N-linked (GlcNAc...) asparagine; by host). The helical transmembrane segment at 322 to 342 threads the bilayer; that stretch reads FTTILLVIGGILLLTFIGFVI.

This sequence belongs to the baculoviridae E56 family.

It is found in the virion membrane. Its function is as follows. Structural protein that is specific for occlusion-derived virus (ODV) envelopes but not of budded virus (BV). The chain is Occlusion-derived virus envelope protein E56 (odv-e56) from Cydia pomonella granulosis virus (isolate Mexico/1963) (CpGV).